The following is a 63-amino-acid chain: Prokaryotic ubiquitin-like protein UBact (63 aa).

The disordered stretch occupies residues 1-63; the sequence is MSGRSTFGRF…SRRYRQRTGE (63 aa). A compositionally biased stretch (basic and acidic residues) spans 17–50; sequence PWERKPGDDEGGPKRPKVERPDTNDLLKRMRRVD. An Isoglutamyl lysine isopeptide (Glu-Lys) (interchain with K-? in acceptor proteins) cross-link involves residue Glu63.

Belongs to the ubiquitin-like protein UBact family.

Functionally, may function as a protein modifier covalently attached to lysine residues of substrate proteins. This may serve to target the modified proteins for degradation by proteasomes. This is Prokaryotic ubiquitin-like protein UBact from Handelsmanbacteria sp. (strain RIFCSPLOWO2_12_FULL_64_10).